The primary structure comprises 61 residues: Small ribosomal subunit protein bS21 (61 aa).

It belongs to the bacterial ribosomal protein bS21 family.

This is Small ribosomal subunit protein bS21 from Methylacidiphilum infernorum (isolate V4) (Methylokorus infernorum (strain V4)).